Consider the following 211-residue polypeptide: Endonuclease V (211 aa).

2 residues coordinate Mg(2+): Asp37 and Asp102.

This sequence belongs to the endonuclease V family. It depends on Mg(2+) as a cofactor.

The protein localises to the cytoplasm. The enzyme catalyses Endonucleolytic cleavage at apurinic or apyrimidinic sites to products with a 5'-phosphate.. DNA repair enzyme involved in the repair of deaminated bases. Selectively cleaves double-stranded DNA at the second phosphodiester bond 3' to a deoxyinosine leaving behind the intact lesion on the nicked DNA. The polypeptide is Endonuclease V (Ignicoccus hospitalis (strain KIN4/I / DSM 18386 / JCM 14125)).